The primary structure comprises 772 residues: Phenylalanine--tRNA ligase beta subunit (772 aa).

Residues 40–158 form the tRNA-binding domain; it reads IKPSTNLVFA…DHYKTPNQIF (119 aa). The region spanning 397-468 is the B5 domain; it reads SVHNVIKNKI…KKISIQEIKP (72 aa). Mg(2+)-binding residues include Asp-446, Asp-452, Glu-455, and Asp-456. Positions 691 to 772 constitute an FDX-ACB domain; sequence SMYHDVIRDI…QEVNNYLKQF (82 aa).

Belongs to the phenylalanyl-tRNA synthetase beta subunit family. Type 1 subfamily. Tetramer of two alpha and two beta subunits. It depends on Mg(2+) as a cofactor.

The protein localises to the cytoplasm. It carries out the reaction tRNA(Phe) + L-phenylalanine + ATP = L-phenylalanyl-tRNA(Phe) + AMP + diphosphate + H(+). This chain is Phenylalanine--tRNA ligase beta subunit (pheT), found in Ureaplasma parvum serovar 3 (strain ATCC 700970).